A 211-amino-acid chain; its full sequence is tRNA (guanine-N(7)-)-methyltransferase (211 aa).

Glu43, Glu68, Asp95, and Asp117 together coordinate S-adenosyl-L-methionine. Residue Asp117 is part of the active site. Substrate-binding positions include Lys121, Asp153, and 190–193; that span reads TEYE.

This sequence belongs to the class I-like SAM-binding methyltransferase superfamily. TrmB family.

The enzyme catalyses guanosine(46) in tRNA + S-adenosyl-L-methionine = N(7)-methylguanosine(46) in tRNA + S-adenosyl-L-homocysteine. Its pathway is tRNA modification; N(7)-methylguanine-tRNA biosynthesis. In terms of biological role, catalyzes the formation of N(7)-methylguanine at position 46 (m7G46) in tRNA. The sequence is that of tRNA (guanine-N(7)-)-methyltransferase from Staphylococcus carnosus (strain TM300).